A 170-amino-acid polypeptide reads, in one-letter code: FMRFamide-like neuropeptides 6 (170 aa).

The signal sequence occupies residues 1-19; sequence MNSRGLILTLGVVIAVAFA. Residue Gln20 is modified to Pyrrolidone carboxylic acid. Phe39 carries the post-translational modification Phenylalanine amide. Residues 42 to 51 constitute a propeptide that is removed on maturation; it reads SDGGNPMEME. Phe60 carries the post-translational modification Phenylalanine amide. The propeptide occupies 63-81; sequence RSSGGDEQELVGGDDIDME. At Phe90 the chain carries Phenylalanine amide. The propeptide occupies 93–104; sequence RSGPQEDDMPME. Position 113 is a phenylalanine amide (Phe113). Positions 116–136 are excised as a propeptide; sequence RSSDMEVIGNEGVDGDAHDLF. Phe145 bears the Phenylalanine amide mark. Residues 148-159 constitute a propeptide that is removed on maturation; it reads RSMGEEEDHDMM. The disordered stretch occupies residues 150–170; that stretch reads MGEEEDHDMMKRKSAYMRFGR. The span at 159 to 170 shows a compositional bias: basic residues; that stretch reads MKRKSAYMRFGR. Phe168 bears the Phenylalanine amide mark.

It belongs to the FARP (FMRFamide related peptide) family. As to expression, each flp gene is expressed in a distinct set of neurons. Flp-6 is expressed in the ASE sensory neurons, AFD, ASG, PVT and I1 neurons.

The protein localises to the secreted. FMRFamides and FMRFamide-like peptides are neuropeptides. KSAYMRF-amide has an excitatory effect on dissected pharyngeal myogenic muscle system. The chain is FMRFamide-like neuropeptides 6 from Caenorhabditis elegans.